The primary structure comprises 188 residues: Elongation factor P (188 aa).

This sequence belongs to the elongation factor P family.

The protein resides in the cytoplasm. Its pathway is protein biosynthesis; polypeptide chain elongation. Functionally, involved in peptide bond synthesis. Stimulates efficient translation and peptide-bond synthesis on native or reconstituted 70S ribosomes in vitro. Probably functions indirectly by altering the affinity of the ribosome for aminoacyl-tRNA, thus increasing their reactivity as acceptors for peptidyl transferase. The sequence is that of Elongation factor P from Bifidobacterium longum (strain DJO10A).